Reading from the N-terminus, the 481-residue chain is Threonine synthase (481 aa).

Lysine 118 carries the N6-(pyridoxal phosphate)lysine modification.

Belongs to the threonine synthase family. Monomer. Pyridoxal 5'-phosphate is required as a cofactor.

The enzyme catalyses O-phospho-L-homoserine + H2O = L-threonine + phosphate. Its pathway is amino-acid biosynthesis; L-threonine biosynthesis; L-threonine from L-aspartate: step 5/5. Catalyzes the gamma-elimination of phosphate from L-phosphohomoserine and the beta-addition of water to produce L-threonine. This is Threonine synthase (thrC) from Corynebacterium glutamicum (strain ATCC 13032 / DSM 20300 / JCM 1318 / BCRC 11384 / CCUG 27702 / LMG 3730 / NBRC 12168 / NCIMB 10025 / NRRL B-2784 / 534).